Here is a 408-residue protein sequence, read N- to C-terminus: DNA-directed RNA polymerase subunit Rpo1C (408 aa).

The protein belongs to the RNA polymerase beta' chain family. In terms of assembly, part of the RNA polymerase complex.

It localises to the cytoplasm. The catalysed reaction is RNA(n) + a ribonucleoside 5'-triphosphate = RNA(n+1) + diphosphate. DNA-dependent RNA polymerase (RNAP) catalyzes the transcription of DNA into RNA using the four ribonucleoside triphosphates as substrates. Forms part of the jaw domain. The protein is DNA-directed RNA polymerase subunit Rpo1C of Methanosarcina mazei (strain ATCC BAA-159 / DSM 3647 / Goe1 / Go1 / JCM 11833 / OCM 88) (Methanosarcina frisia).